The following is a 353-amino-acid chain: Putative glycosyltransferase TagX (353 aa).

This sequence belongs to the glycosyltransferase 2 family.

In Staphylococcus aureus (strain Mu50 / ATCC 700699), this protein is Putative glycosyltransferase TagX (tagX).